Reading from the N-terminus, the 59-residue chain is Large ribosomal subunit protein bL32 (59 aa).

Belongs to the bacterial ribosomal protein bL32 family.

The chain is Large ribosomal subunit protein bL32 from Synechococcus sp. (strain RCC307).